The sequence spans 657 residues: MMNRRHFIQISATSILALSANRFAMAKGKSDVDLRIVATTDVHSFLTDFDYYKDAPTDKFGFTRAASLIRQARAEVKNSVLVDNGDLIQGNPIADYQAAQGYKEGKSNPAIDCLNAMNYEVGTLGNHEFNYGLNYLADAIKQAKFPIVNSNVVKAGTEEPYFTPYVIQEKSVVDNQGKTHKLKIGYIGFVPPQIMVWDKANLQGKVETRDIVKTAQKYVPEMKKKGADIVVALAHTGPSDEPYQEGAENSAFYLADVPHIDAVIFGHSHRLFPNKEFAKSPNADIVNGTVKGIPESMAGYWANNISVVDLGLTEHKGKWIVTSGKAVLRPIYDIETKKALAKNDPEITALLKPVHEATRKYVSQPIGKATDNMYSYLALLQDDPTIQIVNQAQKAYVEKVAPSIAAMAGLPILSAGAPFKAGGRKNDPTGYTEVNKGKLTFRNAADLYLYPNTLVVVKATGEQLKEWLECSAGMFKQIDPTSDKPQSLIDWEGFRTYNFDVIDGVNYEYDLTKPARYDGECKLINPESHRVVNLTYQGKPVDPKAEFLIATNNYRAYGNKFPGTGDKHIVYASPDESRQILADYIKATSEKEGSVNPNADKNWRFVPITGNDKLDVRFETSPSEQAAKFIAEKAQYPMKQVGTDEIGFAVYQIDLSK.

An N-terminal signal peptide occupies residues 1–26 (MMNRRHFIQISATSILALSANRFAMA). Positions 41, 43, 86, 126, 235, 267, and 269 each coordinate a divalent metal cation. Substrate is bound by residues Y450 and 554 to 559 (YRAYGN).

The protein belongs to the 5'-nucleotidase family. A divalent metal cation is required as a cofactor.

It localises to the periplasm. The catalysed reaction is a nucleoside 2',3'-cyclic phosphate + H2O = a nucleoside 3'-phosphate + H(+). It catalyses the reaction a ribonucleoside 3'-phosphate + H2O = a ribonucleoside + phosphate. This bifunctional enzyme catalyzes two consecutive reactions during ribonucleic acid degradation. Converts a 2',3'-cyclic nucleotide to a 3'-nucleotide and then the 3'-nucleotide to the corresponding nucleoside and phosphate. This is 2',3'-cyclic-nucleotide 2'-phosphodiesterase/3'-nucleotidase (cpdB) from Haemophilus influenzae (strain ATCC 51907 / DSM 11121 / KW20 / Rd).